Reading from the N-terminus, the 427-residue chain is Serine--tRNA ligase (427 aa).

231 to 233 (TAE) lines the L-serine pocket. 262 to 264 (RSE) serves as a coordination point for ATP. Glu285 contributes to the L-serine binding site. Position 349-352 (349-352 (EISS)) interacts with ATP. An L-serine-binding site is contributed by Ser385.

This sequence belongs to the class-II aminoacyl-tRNA synthetase family. Type-1 seryl-tRNA synthetase subfamily. As to quaternary structure, homodimer. The tRNA molecule binds across the dimer.

The protein localises to the cytoplasm. It catalyses the reaction tRNA(Ser) + L-serine + ATP = L-seryl-tRNA(Ser) + AMP + diphosphate + H(+). It carries out the reaction tRNA(Sec) + L-serine + ATP = L-seryl-tRNA(Sec) + AMP + diphosphate + H(+). The protein operates within aminoacyl-tRNA biosynthesis; selenocysteinyl-tRNA(Sec) biosynthesis; L-seryl-tRNA(Sec) from L-serine and tRNA(Sec): step 1/1. Functionally, catalyzes the attachment of serine to tRNA(Ser). Is also able to aminoacylate tRNA(Sec) with serine, to form the misacylated tRNA L-seryl-tRNA(Sec), which will be further converted into selenocysteinyl-tRNA(Sec). The polypeptide is Serine--tRNA ligase (Hahella chejuensis (strain KCTC 2396)).